Reading from the N-terminus, the 640-residue chain is GATA zinc finger domain-containing protein 12 (640 aa).

Disordered stretches follow at residues 121 to 209 (SNNI…NIPI) and 355 to 390 (QQIRLQQQQSQQQHQQHQQHQQHQQPPTNIPQHINN). 2 stretches are compositionally biased toward low complexity: residues 122–209 (NNIP…NIPI) and 355–379 (QQIRLQQQQSQQQHQQHQQHQQHQQ). Positions 380–390 (PPTNIPQHINN) are enriched in polar residues. Residues 506–531 (CVNCKTSDTPEWRRGPQGAKTLCNAC) form a GATA-type zinc finger.

The polypeptide is GATA zinc finger domain-containing protein 12 (gtaL) (Dictyostelium discoideum (Social amoeba)).